A 509-amino-acid chain; its full sequence is Aromatase (509 aa).

Heme is bound at residue C437.

This sequence belongs to the cytochrome P450 family. The cofactor is heme.

The protein localises to the membrane. It carries out the reaction testosterone + 3 reduced [NADPH--hemoprotein reductase] + 3 O2 = 17beta-estradiol + formate + 3 oxidized [NADPH--hemoprotein reductase] + 4 H2O + 4 H(+). It catalyses the reaction androst-4-ene-3,17-dione + 3 reduced [NADPH--hemoprotein reductase] + 3 O2 = estrone + formate + 3 oxidized [NADPH--hemoprotein reductase] + 4 H2O + 4 H(+). Functionally, catalyzes the formation of aromatic C18 estrogens from C19 androgens. The chain is Aromatase (CYP19A1) from Taeniopygia guttata (Zebra finch).